Consider the following 435-residue polypeptide: Mitochondrial association factor 1 form b0 (435 aa).

The N-terminal stretch at 1-27 (MWRIWRCRLSFLFVTGCLLGALTAGLG) is a signal peptide. Topologically, residues 28–96 (SQMSDSVGRN…VTARRRRNRR (69 aa)) are vacuolar. Residues 43-89 (GVADASQEAGDVVEERTERTEEQVFAPGPPRRHSSESLFPRNPSVTA) are disordered. Over residues 55-64 (VEERTERTEE) the composition is skewed to basic and acidic residues. A helical membrane pass occupies residues 97–117 (ITLIATAVGVAVILAALYVLR). Topologically, residues 118-435 (RRRAQPPQEP…ESTYLASMLD (318 aa)) are cytoplasmic. Residues 120–162 (RAQPPQEPEPPTRLRTPRPRAPSGQQQPSESEPPAGVPMKPGS) are disordered.

The protein localises to the parasitophorous vacuole membrane. During host cell infection by tachyzoites, does not play a role in tethering the parasitophorous vacuole to the host mitochondria. The polypeptide is Mitochondrial association factor 1 form b0 (Toxoplasma gondii).